A 345-amino-acid polypeptide reads, in one-letter code: Short-wave-sensitive opsin 1 (345 aa).

Over 1–30 (MSEEEFYLFKNISSVGPWDGPQYHIAPVWA) the chain is Extracellular. N11 carries an N-linked (GlcNAc...) asparagine glycan. A helical membrane pass occupies residues 31 to 55 (FYLQAAFMGTVFLIGFPLNAMVLVA). Topologically, residues 56 to 67 (TLRYKKLRQPLN) are cytoplasmic. Residues 68–93 (YILVNVSFGGFLLCIFSVFPVFVASC) traverse the membrane as a helical segment. Residues 94 to 107 (NGYFVFGRHVCALE) lie on the Extracellular side of the membrane. A disulfide bridge connects residues C104 and C181. A helical membrane pass occupies residues 108–127 (GFLGTVAGLVTGWSLAFLAF). Residues 128-146 (ERYIVICKPFGNFRFSSKH) are Cytoplasmic-facing. A helical membrane pass occupies residues 147-170 (ALTVVLATWTIGIGVSIPPFFGWS). Over 171–196 (RFIPEGLQCSCGPDWYTVGTKYRSES) the chain is Extracellular. A helical membrane pass occupies residues 197–224 (YTWFLFIFCFIVPLSLICFSYTQLLRAL). Over 225 to 246 (KAVAAQQQESATTQKAEREVSR) the chain is Cytoplasmic. Residues 247–270 (MVVVMVGSFCVCYVPYAAFAMYMV) form a helical membrane-spanning segment. Topologically, residues 271–278 (NNRNHGLD) are extracellular. Residues 279 to 303 (LRLVTIPSFFSKSACIYNPIIYCFM) traverse the membrane as a helical segment. K290 is subject to N6-(retinylidene)lysine. Over 304-345 (NKQFQACIMKMVCGKAMTDESDTCSSQKTEVSTVSSTQVGPN) the chain is Cytoplasmic.

This sequence belongs to the G-protein coupled receptor 1 family. Opsin subfamily. In terms of processing, phosphorylated on some or all of the serine and threonine residues present in the C-terminal region. In terms of tissue distribution, the three color pigments are found in the cone photoreceptor cells. Expressed throughout the epidermis and dermis, primarily in the stratum granulosum in the facial and abdominal skin (at protein level). Expressed in dermal fibroblasts (at protein level). Expressed in melanocytes (at protein level).

It localises to the cell membrane. The protein localises to the photoreceptor inner segment. The protein resides in the cell projection. It is found in the cilium. Its subcellular location is the photoreceptor outer segment. It localises to the cytoplasm. The protein localises to the perinuclear region. Functionally, visual pigments are the light-absorbing molecules that mediate vision. They consist of an apoprotein, opsin, covalently linked to cis-retinal. Required for the maintenance of cone outer segment organization in the ventral retina, but not essential for the maintenance of functioning cone photoreceptors. Involved in ensuring correct abundance and localization of retinal membrane proteins. May increase spectral sensitivity in dim light. The chain is Short-wave-sensitive opsin 1 (OPN1SW) from Homo sapiens (Human).